Consider the following 276-residue polypeptide: Probable endonuclease 4 (276 aa).

Residues His66, His106, Glu141, Asp175, His178, His210, Asp223, His225, and Glu255 each coordinate Zn(2+).

It belongs to the AP endonuclease 2 family. The cofactor is Zn(2+).

The enzyme catalyses Endonucleolytic cleavage to 5'-phosphooligonucleotide end-products.. Its function is as follows. Endonuclease IV plays a role in DNA repair. It cleaves phosphodiester bonds at apurinic or apyrimidinic (AP) sites, generating a 3'-hydroxyl group and a 5'-terminal sugar phosphate. The protein is Probable endonuclease 4 of Heliobacterium modesticaldum (strain ATCC 51547 / Ice1).